Here is a 229-residue protein sequence, read N- to C-terminus: Urease accessory protein UreF (229 aa).

Belongs to the UreF family. As to quaternary structure, ureD, UreF and UreG form a complex that acts as a GTP-hydrolysis-dependent molecular chaperone, activating the urease apoprotein by helping to assemble the nickel containing metallocenter of UreC. The UreE protein probably delivers the nickel.

The protein localises to the cytoplasm. Its function is as follows. Required for maturation of urease via the functional incorporation of the urease nickel metallocenter. The protein is Urease accessory protein UreF of Trichormus variabilis (strain ATCC 29413 / PCC 7937) (Anabaena variabilis).